A 3722-amino-acid chain; its full sequence is Vitelline envelope sperm lysin receptor (3722 aa).

A signal peptide spans 1-24; it reads MSGMQWSFGFSCLFFLKTVWICQA. The Extracellular segment spans residues 25 to 3698; sequence FDADTPDPRV…TPSTDMATVQ (3674 aa). 2 disulfide bridges follow: Cys-43-Cys-141 and Cys-72-Cys-104. A VERL 1 repeat occupies 77–155; sequence MQMTRGRGIN…SQASNAPEPK (79 aa). N-linked (GlcNAc...) asparagine glycans are attached at residues Asn-115, Asn-122, and Asn-142. Residues 146–169 form a disordered region; sequence SQASNAPEPKASPTSSTPQPEAAS. Residues 157-169 show a composition bias toward polar residues; the sequence is SPTSSTPQPEAAS. The N-linked (GlcNAc...) asparagine glycan is linked to Asn-171. 2 disulfides stabilise this stretch: Cys-182-Cys-280 and Cys-211-Cys-243. A VERL 2 repeat occupies 216-293; sequence VPITHEHGFN…KSPDAPKPES (78 aa). Residue Asn-254 is glycosylated (N-linked (GlcNAc...) asparagine). A disordered region spans residues 279–335; that stretch reads QCYMPKSPDAPKPESCLSSPPEPEASPSSNAPEPETYPTSSAPEKVSSDQPAPSHNQ. Over residues 291–312 the composition is skewed to low complexity; that stretch reads PESCLSSPPEPEASPSSNAPEP. Polar residues predominate over residues 315–335; sequence YPTSSAPEKVSSDQPAPSHNQ. Asn-334 and Asn-373 each carry an N-linked (GlcNAc...) asparagine glycan. Intrachain disulfides connect Cys-345/Cys-443 and Cys-374/Cys-406. The stretch at 379–455 is one VERL 3 repeat; that stretch reads VPITQEFGIN…PKSPVAPKPE (77 aa). N-linked (GlcNAc...) asparagine glycans are attached at residues Asn-417, Asn-438, Asn-487, Asn-501, Asn-526, Asn-570, Asn-591, Asn-640, Asn-654, Asn-679, Asn-723, Asn-744, Asn-793, Asn-807, Asn-832, Asn-876, Asn-897, Asn-946, Asn-960, Asn-985, Asn-1029, Asn-1050, Asn-1099, Asn-1113, Asn-1138, Asn-1182, Asn-1203, Asn-1252, Asn-1266, Asn-1291, Asn-1335, Asn-1356, Asn-1405, Asn-1419, Asn-1443, and Asn-1487. A disordered region spans residues 443–488; it reads CYMPKSPVAPKPETGPTSNAPEPETYPTSSAPEKVSSDQPAPSHNQ. Polar residues predominate over residues 457 to 488; that stretch reads GPTSNAPEPETYPTSSAPEKVSSDQPAPSHNQ. The VERL 4 repeat unit spans residues 532 to 608; sequence VPITQEFGIN…PKSPVAPKPE (77 aa). The tract at residues 603–641 is disordered; that stretch reads VAPKPETGPTSNAPEPETYPTSSAPEKVSSDQPAPSHNQ. The segment covering 610 to 641 has biased composition (polar residues); sequence GPTSNAPEPETYPTSSAPEKVSSDQPAPSHNQ. A VERL 5 repeat occupies 685–761; that stretch reads VPITQEFGIN…PKSPVAPKPE (77 aa). The segment at 756–794 is disordered; sequence VAPKPETGPSSNAPEPETYPTSSAPEKVSSDQPAPSHNQ. Residues 763–794 are compositionally biased toward polar residues; that stretch reads GPSSNAPEPETYPTSSAPEKVSSDQPAPSHNQ. Residues 838 to 914 form a VERL 6 repeat; sequence VPITQEFGIN…PKSPVAPKPE (77 aa). A disordered region spans residues 909-947; it reads VAPKPETGPTSNAPEPETYPTSSAPEKVSSDQPAPSHNQ. Residues 916–947 show a composition bias toward polar residues; sequence GPTSNAPEPETYPTSSAPEKVSSDQPAPSHNQ. A VERL 7 repeat occupies 991–1067; the sequence is VPITHEFGIN…PKSPVAPKPE (77 aa). The segment at 1062-1100 is disordered; it reads VAPKPETGPTSNAPEPETYPTSSAPEKVSSDQPAPSHNQ. Positions 1069 to 1100 are enriched in polar residues; the sequence is GPTSNAPEPETYPTSSAPEKVSSDQPAPSHNQ. One copy of the VERL 8 repeat lies at 1144–1220; that stretch reads VPITQEFGIN…PKSPVAPKPE (77 aa). The interval 1215 to 1253 is disordered; the sequence is VAPKPETGPTSNAPEPETYPTSSAPEKVSSDQPAPSHNQ. Residues 1222–1253 show a composition bias toward polar residues; that stretch reads GPTSNAPEPETYPTSSAPEKVSSDQPAPSHNQ. Residues 1297–1373 form a VERL 9 repeat; the sequence is VPITHKFGIN…PKSPVAHKPE (77 aa). The tract at residues 1368–1406 is disordered; it reads VAHKPETGPTSNAPEPETYPTSSAPEKVSSDQPAPSHNQ. A compositionally biased stretch (polar residues) spans 1375–1406; sequence GPTSNAPEPETYPTSSAPEKVSSDQPAPSHNQ. The VERL 10 repeat unit spans residues 1449–1525; it reads VPITHEFGIN…PKSPVAPKPE (77 aa). The segment at 1519–1556 is disordered; it reads PVAPKPETGPSSNAPEPETYPTSSAPEKVYSDQPAPSH. Polar residues predominate over residues 1527 to 1543; the sequence is GPSSNAPEPETYPTSSA. Asn-1557, Asn-1571, Asn-1596, Asn-1640, Asn-1661, Asn-1710, Asn-1724, Asn-1749, Asn-1793, Asn-1814, Asn-1863, Asn-1877, Asn-1902, Asn-1946, Asn-1967, Asn-2016, Asn-2030, Asn-2055, Asn-2099, Asn-2120, Asn-2169, Asn-2183, Asn-2208, Asn-2252, Asn-2273, Asn-2322, Asn-2336, Asn-2361, Asn-2405, Asn-2426, Asn-2475, Asn-2489, Asn-2514, Asn-2558, Asn-2579, Asn-2628, Asn-2642, Asn-2667, Asn-2711, Asn-2732, Asn-2781, Asn-2795, Asn-2820, Asn-2864, Asn-2885, Asn-2934, Asn-2948, Asn-2973, Asn-3017, Asn-3038, Asn-3087, Asn-3101, Asn-3126, Asn-3170, Asn-3191, Asn-3229, Asn-3243, Asn-3268, Asn-3312, and Asn-3333 each carry an N-linked (GlcNAc...) asparagine glycan. Residues 1602-1678 form a VERL 11 repeat; the sequence is VPITHEFGIN…PKSPVAPKPE (77 aa). Positions 1672-1711 are disordered; it reads PVAPKPETGPTSNAPEPQTYPTSSAPEKVSSDQPAPSHNQ. Positions 1680 to 1711 are enriched in polar residues; sequence GPTSNAPEPQTYPTSSAPEKVSSDQPAPSHNQ. One copy of the VERL 12 repeat lies at 1755–1831; that stretch reads VPITQEFGIN…PKSPVAPKPE (77 aa). Positions 1826–1864 are disordered; that stretch reads VAPKPETGPTSNAPEPETYPTSSAPEKVSSDQPAPSHNQ. Positions 1833-1864 are enriched in polar residues; the sequence is GPTSNAPEPETYPTSSAPEKVSSDQPAPSHNQ. The stretch at 1908–1984 is one VERL 13 repeat; the sequence is VPITHEFGIN…PKSPVAPKPE (77 aa). Residues 1979–2017 are disordered; that stretch reads VAPKPETGPTSNAPEPETYPTSSAPEKVSSDQPAPSHNQ. Positions 1986–2017 are enriched in polar residues; the sequence is GPTSNAPEPETYPTSSAPEKVSSDQPAPSHNQ. One copy of the VERL 14 repeat lies at 2061–2137; it reads VPITQEFGIN…PKSPVAPKPE (77 aa). Residues 2132–2170 form a disordered region; the sequence is VAPKPETGPTSNAPEPETYPTSSAPEKVSSDQPAPSHNQ. Polar residues predominate over residues 2139–2170; the sequence is GPTSNAPEPETYPTSSAPEKVSSDQPAPSHNQ. A VERL 15 repeat occupies 2214 to 2290; it reads VPITQEFGIN…PKSPVAPKPE (77 aa). Residues 2285–2323 form a disordered region; it reads VAPKPETGPTSNAPEPETYPTSSAPEKVSSDQPAPSHNQ. Polar residues predominate over residues 2292–2323; that stretch reads GPTSNAPEPETYPTSSAPEKVSSDQPAPSHNQ. One copy of the VERL 16 repeat lies at 2367–2443; the sequence is VPITQEFGIN…PKSPVAPKPE (77 aa). Residues 2438–2476 are disordered; that stretch reads VAPKPETGPTSNAPEPETYPTSSAPEKVSSDQPAPSHNQ. Residues 2445-2476 are compositionally biased toward polar residues; that stretch reads GPTSNAPEPETYPTSSAPEKVSSDQPAPSHNQ. One copy of the VERL 17 repeat lies at 2520 to 2596; sequence VPITQEFGIN…PKSPVAPKPE (77 aa). Positions 2590-2629 are disordered; that stretch reads PVAPKPETGPTSNAPEPQTYPTSSAPEKVSSDQPAPSHNQ. A compositionally biased stretch (polar residues) spans 2598-2629; it reads GPTSNAPEPQTYPTSSAPEKVSSDQPAPSHNQ. The VERL 18 repeat unit spans residues 2673–2749; sequence VPITQEFGIN…PKSPVAPKPE (77 aa). The segment at 2744–2782 is disordered; the sequence is VAPKPETGPTSNAPEPETYPTSSAPEKVSSDQPAPSHNQ. The segment covering 2751 to 2782 has biased composition (polar residues); it reads GPTSNAPEPETYPTSSAPEKVSSDQPAPSHNQ. The stretch at 2826–2902 is one VERL 19 repeat; sequence VPITHEFGIN…PKSPVAPKPE (77 aa). Positions 2897–2935 are disordered; it reads VAPKPETGPTSNAPEPQTYPTSSAPEKVSSDQPAPSHNQ. Positions 2904–2935 are enriched in polar residues; it reads GPTSNAPEPQTYPTSSAPEKVSSDQPAPSHNQ. A VERL 20 repeat occupies 2979-3055; sequence VPITQEFGIN…PKSPVAPKPE (77 aa). The tract at residues 3050 to 3088 is disordered; it reads VAPKPETGPTSNAPEPETYPTSSAPEKVSSDQPAPSHNQ. Over residues 3057-3088 the composition is skewed to polar residues; that stretch reads GPTSNAPEPETYPTSSAPEKVSSDQPAPSHNQ. A VERL 21 repeat occupies 3132–3208; the sequence is VPITQEFGIN…PKSPVAPKPE (77 aa). A disordered region spans residues 3205-3230; sequence PKPETYPTSSAPEKVSSDQPAPSHNQ. Positions 3210-3230 are enriched in polar residues; sequence YPTSSAPEKVSSDQPAPSHNQ. Residues 3274–3351 form a VERL 22 repeat; it reads VPITHEFGIN…KSPVAPKPEA (78 aa). The segment at 3345-3407 is disordered; it reads VAPKPEASPT…RKSNQTTSTE (63 aa). Residues 3352–3375 show a composition bias toward polar residues; the sequence is SPTSNAPEPQTYPTSSAPGTSPEG. Residues Asn-3388, Asn-3401, Asn-3449, Asn-3456, Asn-3559, and Asn-3650 are each glycosylated (N-linked (GlcNAc...) asparagine). The ZP domain occupies 3408–3670; the sequence is DVLDDTSNYI…SSCSNQRRTR (263 aa). Residues 3699–3719 form a helical membrane-spanning segment; sequence VALLVAVALLITQLAGLAIYV. The Cytoplasmic segment spans residues 3720–3722; that stretch reads NIN.

May form disulfide-linked homodimers. Interacts (via VERL repeats) with sperm lysin. Each VERL chain can bind numerous lysin molecules. N-glycosylated. About half of the glycoprotein mass corresponds to carbohydrate chains. N-glycosylation is not required for lysin binding. In terms of processing, O-glycosylated. O-glycosylation is not required for lysin binding.

The protein localises to the cell membrane. The protein resides in the secreted. It is found in the extracellular space. It localises to the extracellular matrix. Its function is as follows. Structural component of the egg vitelline envelope; forms long filaments. Functions as a species-specific receptor for the sperm protein lysin; prevents fertilization by sperm from other species. Each VERL chain can bind multiple copies of the sperm protein lysin; this creates a 3 um hole in the egg vitelline envelope through which the sperm passes. The sequence is that of Vitelline envelope sperm lysin receptor from Haliotis rufescens (California red abalone).